Reading from the N-terminus, the 198-residue chain is Probable nicotinate-nucleotide adenylyltransferase (198 aa).

The protein belongs to the NadD family.

The catalysed reaction is nicotinate beta-D-ribonucleotide + ATP + H(+) = deamido-NAD(+) + diphosphate. Its pathway is cofactor biosynthesis; NAD(+) biosynthesis; deamido-NAD(+) from nicotinate D-ribonucleotide: step 1/1. Functionally, catalyzes the reversible adenylation of nicotinate mononucleotide (NaMN) to nicotinic acid adenine dinucleotide (NaAD). In Herpetosiphon aurantiacus (strain ATCC 23779 / DSM 785 / 114-95), this protein is Probable nicotinate-nucleotide adenylyltransferase.